The following is a 36-amino-acid chain: Glucagon (36 aa).

The protein belongs to the glucagon family. In terms of tissue distribution, produced by the X-cells of the islets of pancreas.

The protein localises to the secreted. Functionally, promotes hydrolysis of glycogen and lipids, and raises the blood sugar level. The protein is Glucagon (gcg) of Hydrolagus colliei (Spotted ratfish).